The primary structure comprises 405 residues: Dematin (405 aa).

Disordered stretches follow at residues 1–29 (MERL…SPSS), 81–100 (SREC…PEVW), and 108–332 (IISQ…DRGN). The span at 11-29 (SPGSVSSSRDSSVPGSPSS) shows a compositional bias: low complexity. Phosphoserine occurs at positions 16, 18, 26, 92, 96, 110, and 113. Residues 113 to 124 (STPRTTGTPRTS) are compositionally biased toward low complexity. At Thr-114 the chain carries Phosphothreonine. Phosphoserine occurs at positions 156 and 226. The segment covering 216–228 (EEEEEEEDDDSEE) has biased composition (acidic residues). The segment at 224–308 (DDSEEEIKAI…SRLQSTEFSP (85 aa)) is interaction with RASGRF2. Basic and acidic residues-rich tracts occupy residues 229–242 (EIKA…EELS) and 252–261 (ILKEEMEKSL). Phosphoserine occurs at positions 269, 279, 289, 303, 315, 333, 372, and 383. Over residues 277 to 292 (HTSLHSGTSKSSSLPS) the composition is skewed to low complexity. Positions 294 to 322 (GRTTLSRLQSTEFSPSGSEAGSPGLQNGE) are enriched in polar residues. The HP domain maps to 337–405 (VLEQKIYPYE…NELKKKASLF (69 aa)). Position 403 is a phosphoserine; by PKA (Ser-403).

This sequence belongs to the villin/gelsolin family. In terms of assembly, monomeric (isoform 2); under reducing conditions. Self-associates. Exists under oxidizing condition as a trimer of two isoforms 2 and isoform 1 linked by disulfide bonds. Found in a complex with DMTN, F-actin and spectrin. Found in a complex with ADD2, DMTN and SLC2A1. Interacts with F-actin, ITPKB and spectrin. Isoform 2 interacts with SLC2A1 (via C-terminus cytoplasmic region). Interacts with RASGRF2. In terms of processing, phosphorylated. Phosphorylation at Ser-403 by PKA causes the C-terminal headpiece domain to associate with the N-terminal core domain, and leads to the inhibition of its actin bundling activity. As to expression, expressed in platelets. Isoform 1 and isoform 2 are expressed in mature erythrocytes (at protein level).

Its subcellular location is the cytoplasm. The protein localises to the cytosol. It localises to the perinuclear region. It is found in the cytoskeleton. The protein resides in the cell membrane. Its subcellular location is the membrane. The protein localises to the endomembrane system. It localises to the cell projection. Membrane-cytoskeleton-associated protein with F-actin-binding activity that induces F-actin bundles formation and stabilization. Its F-actin-bundling activity is reversibly regulated upon its phosphorylation by the cAMP-dependent protein kinase A (PKA). Binds to the erythrocyte membrane glucose transporter-1 SLC2A1/GLUT1, and hence stabilizes and attaches the spectrin-actin network to the erythrocytic plasma membrane. Plays a role in maintaining the functional integrity of PKA-activated erythrocyte shape and the membrane mechanical properties. Also plays a role as a modulator of actin dynamics in fibroblasts; acts as a negative regulator of the RhoA activation pathway. In platelets, functions as a regulator of internal calcium mobilization across the dense tubular system that affects platelet granule secretion pathways and aggregation. Also required for the formation of a diverse set of cell protrusions, such as filopodia and lamellipodia, necessary for platelet cell spreading, motility and migration. Acts as a tumor suppressor and inhibits malignant cell transformation. This chain is Dematin (Dmtn), found in Mus musculus (Mouse).